The sequence spans 328 residues: Phosphate acetyltransferase (328 aa).

Belongs to the phosphate acetyltransferase and butyryltransferase family.

Its subcellular location is the cytoplasm. It catalyses the reaction acetyl-CoA + phosphate = acetyl phosphate + CoA. The protein operates within metabolic intermediate biosynthesis; acetyl-CoA biosynthesis; acetyl-CoA from acetate: step 2/2. In Staphylococcus aureus (strain MRSA252), this protein is Phosphate acetyltransferase (pta).